An 803-amino-acid polypeptide reads, in one-letter code: MADMSVKQLADLVRTTPERLLEQLKEAGVAITHVDQTISDEEKRKLLLHLKTSHSTETDKKRSKIVLKRKKLSVVKSGKKSVNVEIRSKRTYTKPVVEQKRETEPAPTQEVPPTSDTTNLNEKAEVNVATLEKAVEAEVKEEAKKTPSEKKETPKKGPRKETRRSRKPDKEDKWEREELHMTKLVEERRRRHKPAHMPDSDSASAKLEQGFARPTAPVVREVALPESITVADLAQKMSVKAAEVIKAMMKLGAMVTINQRIDQETAAIVVEEMGHKPKLIKEDVLEENLVATLGEQTGEAVPRAPVVTIMGHVDHGKTSLLDYIRRTKVTSTEAGGITQHIGAYHVETELGMITFLDTPGHEAFTAMRARGAKCTDIVVLVVAADDGVMPQTVEAIQHARAAKVPVVVAVNKIDKPEADPERIKTELSTHDVLPEEWGGDTMFQPISAKTGEGIDALLERILLQAEVLELKAVDNGPARGMVVESRLDRGRGPVATVLVTSGELHLGDILLVGREYGRVRAMIGDDGRPCESAGPSMPVEVLGLSGTSVAGEEAIVVPDERKAREIARFRQGKYREVRLAKKQTAHLERIFDRMGEGKQNTLNIVLKADVQGSLEALTEALNKLSTDEVKVNIIASGVGGITESDVNLAIASDAVVIGFNVRADAPTRVLVEREGVDLRYYSIIYDLIDEVKKALSGLLAPEFEEKIVGLAEVRDVFRSSKIGAIAGCMVVEGVVRRHLPIRVLRDNVVIYEGQLESLRRYKEDVAEVRQGTECGIGVKNYNDVKVGDQIEVYEKTQVHRTIA.

2 disordered regions span residues 93–123 (TKPV…LNEK) and 138–206 (EVKE…ASAK). The segment covering 111 to 121 (VPPTSDTTNLN) has biased composition (polar residues). Over residues 138 to 155 (EVKEEAKKTPSEKKETPK) the composition is skewed to basic and acidic residues. Over residues 156-167 (KGPRKETRRSRK) the composition is skewed to basic residues. Basic and acidic residues predominate over residues 168-188 (PDKEDKWEREELHMTKLVEER). A tr-type G domain is found at 302-471 (PRAPVVTIMG…LLQAEVLELK (170 aa)). Positions 311 to 318 (GHVDHGKT) are G1. 311–318 (GHVDHGKT) contacts GTP. Positions 336–340 (GITQH) are G2. The tract at residues 357–360 (DTPG) is G3. Residues 357–361 (DTPGH) and 411–414 (NKID) contribute to the GTP site. Residues 411-414 (NKID) form a G4 region. Residues 447-449 (SAK) form a G5 region.

This sequence belongs to the TRAFAC class translation factor GTPase superfamily. Classic translation factor GTPase family. IF-2 subfamily.

The protein resides in the cytoplasm. In terms of biological role, one of the essential components for the initiation of protein synthesis. Protects formylmethionyl-tRNA from spontaneous hydrolysis and promotes its binding to the 30S ribosomal subunits. Also involved in the hydrolysis of GTP during the formation of the 70S ribosomal complex. The polypeptide is Translation initiation factor IF-2 (Coxiella burnetii (strain RSA 493 / Nine Mile phase I)).